The primary structure comprises 505 residues: Catalase (505 aa).

Residues 1–25 (MSQQDKKLTGVFGHPVSDRENSMTA) form a disordered region. Catalysis depends on residues His-56 and Asn-129. Heme is bound at residue Tyr-339.

This sequence belongs to the catalase family. As to quaternary structure, homodimer. The cofactor is heme.

The enzyme catalyses 2 H2O2 = O2 + 2 H2O. Functionally, decomposes hydrogen peroxide into water and oxygen; serves to protect cells from the toxic effects of hydrogen peroxide. This chain is Catalase (katA), found in Staphylococcus aureus (strain MSSA476).